The primary structure comprises 455 residues: tRNA modification GTPase MnmE (455 aa).

Residues arginine 23, glutamate 85, and arginine 124 each contribute to the (6S)-5-formyl-5,6,7,8-tetrahydrofolate site. In terms of domain architecture, TrmE-type G spans glycine 220–isoleucine 375. Residue asparagine 230 coordinates K(+). Residues asparagine 230 to serine 235, threonine 249 to threonine 255, and aspartate 274 to glycine 277 each bind GTP. Serine 234 contacts Mg(2+). Residues threonine 249, valine 251, and threonine 254 each contribute to the K(+) site. Threonine 255 serves as a coordination point for Mg(2+). Lysine 455 serves as a coordination point for (6S)-5-formyl-5,6,7,8-tetrahydrofolate.

It belongs to the TRAFAC class TrmE-Era-EngA-EngB-Septin-like GTPase superfamily. TrmE GTPase family. Homodimer. Heterotetramer of two MnmE and two MnmG subunits. The cofactor is K(+).

The protein localises to the cytoplasm. Functionally, exhibits a very high intrinsic GTPase hydrolysis rate. Involved in the addition of a carboxymethylaminomethyl (cmnm) group at the wobble position (U34) of certain tRNAs, forming tRNA-cmnm(5)s(2)U34. In Geotalea uraniireducens (strain Rf4) (Geobacter uraniireducens), this protein is tRNA modification GTPase MnmE.